A 114-amino-acid polypeptide reads, in one-letter code: UPF0757 protein YmgG (114 aa).

The protein belongs to the UPF0757 family.

The protein is UPF0757 protein YmgG of Escherichia fergusonii (strain ATCC 35469 / DSM 13698 / CCUG 18766 / IAM 14443 / JCM 21226 / LMG 7866 / NBRC 102419 / NCTC 12128 / CDC 0568-73).